The following is a 778-amino-acid chain: Serine/threonine-protein kinase BRSK1 (778 aa).

Positions 1–12 (MSSGAKEGGGGS) are enriched in gly residues. The interval 1-29 (MSSGAKEGGGGSPAYHLPHPHPHPPQHAQ) is disordered. The Protein kinase domain occupies 34–285 (YRLEKTLGKG…LEQIQKHPWY (252 aa)). ATP-binding positions include 40–48 (LGKGQTGLV) and lysine 63. The active-site Proton acceptor is the aspartate 156. Threonine 189 is modified (phosphothreonine; by LKB1). The UBA domain maps to 314–356 (ELDPDVLESMASLGCFRDRERLHRELRSEEENQEKMIYYLLLD). Basic and acidic residues predominate over residues 362–383 (PSCEDQDLPPRNDVDPPRKRVD). The disordered stretch occupies residues 362–548 (PSCEDQDLPP…SPGGGVGGAA (187 aa)). Phosphoserine occurs at positions 399, 443, 447, and 450. Low complexity predominate over residues 430 to 457 (SRSVSGASTGLSSSPLSSPRSPVFSFSP). An omega-N-methylarginine mark is found at arginine 466, arginine 481, arginine 484, and arginine 498. Residues 491–508 (QPPPPSARSTPLPGPPGS) show a composition bias toward pro residues. Position 508 is a phosphoserine (serine 508). Residues 509-533 (PRSSGGTPLHSPLHTPRASPTGTPG) are compositionally biased toward low complexity. Omega-N-methylarginine is present on arginine 525. Threonine 529 and threonine 535 each carry phosphothreonine. At arginine 550 the chain carries Omega-N-methylarginine. Threonine 583 is subject to Phosphothreonine. 3 positions are modified to phosphoserine: serine 586, serine 587, and serine 601. The disordered stretch occupies residues 719-778 (QPSVQALADEKNGAQTRPAGAPPRSLQPPPGRPDPELSSSPRRGPPKDKKLLATNGTPLP).

This sequence belongs to the protein kinase superfamily. CAMK Ser/Thr protein kinase family. SNF1 subfamily. Mg(2+) is required as a cofactor. In terms of processing, phosphorylated at Thr-189 by STK11/LKB1 in complex with STE20-related adapter-alpha (STRADA) pseudo kinase and CAB39. Not phosphorylated at Thr-189 by CaMKK2. In contrast, it is phosphorylated and activated by CaMKK1. May be inactivated via dephosphorylation of Thr-189 by PP2C. In terms of tissue distribution, widely expressed, with highest levels in brain and testis. Protein levels remain constant throughout the cell cycle.

The protein resides in the cytoplasm. The protein localises to the nucleus. It is found in the cytoskeleton. Its subcellular location is the microtubule organizing center. It localises to the centrosome. The protein resides in the synapse. The protein localises to the presynaptic active zone. It is found in the cytoplasmic vesicle. Its subcellular location is the secretory vesicle. It localises to the synaptic vesicle. It carries out the reaction L-seryl-[protein] + ATP = O-phospho-L-seryl-[protein] + ADP + H(+). The catalysed reaction is L-threonyl-[protein] + ATP = O-phospho-L-threonyl-[protein] + ADP + H(+). It catalyses the reaction L-seryl-[tau protein] + ATP = O-phospho-L-seryl-[tau protein] + ADP + H(+). The enzyme catalyses L-threonyl-[tau protein] + ATP = O-phospho-L-threonyl-[tau protein] + ADP + H(+). Its activity is regulated as follows. Activated by phosphorylation on Thr-189 by STK11/LKB1. Its function is as follows. Serine/threonine-protein kinase that plays a key role in polarization of neurons and centrosome duplication. Phosphorylates CDC25B, CDC25C, MAPT/TAU, RIMS1, TUBG1, TUBG2 and WEE1. Following phosphorylation and activation by STK11/LKB1, acts as a key regulator of polarization of cortical neurons, probably by mediating phosphorylation of microtubule-associated proteins such as MAPT/TAU at 'Thr-529' and 'Ser-579'. Also regulates neuron polarization by mediating phosphorylation of WEE1 at 'Ser-642' in postmitotic neurons, leading to down-regulate WEE1 activity in polarized neurons. In neurons, localizes to synaptic vesicles and plays a role in neurotransmitter release, possibly by phosphorylating RIMS1. Also acts as a positive regulator of centrosome duplication by mediating phosphorylation of gamma-tubulin (TUBG1 and TUBG2) at 'Ser-131', leading to translocation of gamma-tubulin and its associated proteins to the centrosome. Involved in the UV-induced DNA damage checkpoint response, probably by inhibiting CDK1 activity through phosphorylation and activation of WEE1, and inhibition of CDC25B and CDC25C. In Homo sapiens (Human), this protein is Serine/threonine-protein kinase BRSK1 (BRSK1).